Here is a 295-residue protein sequence, read N- to C-terminus: MTARIIDGKTISAEVRARVAAEVTRLKTDHGITPGLAVVLVGNDPASEVYVRSKHKQTQEAGMASFEHRLPADVPQAELMALIAKLNADPAVHGILVQLPLPKGLDSNAVIDAIDPAKDVDGLNPTNAGRLASGLFALTPCTPLGSIIMAKTVHASLEGMNALVIGRSNLVGKPLVQLLLNENATVTIAHSRTRDLPALCRQADLVFAAVGKAEMVKGDWIKPGATVIDVGINRTPGKDGGKDKLLGDVAFAEAKEVAGAITPVPGGVGLMTVACLLVNTVRAACAIHGLPKPAV.

Residues 166-168, serine 191, and isoleucine 232 contribute to the NADP(+) site; that span reads GRS.

This sequence belongs to the tetrahydrofolate dehydrogenase/cyclohydrolase family. In terms of assembly, homodimer.

It catalyses the reaction (6R)-5,10-methylene-5,6,7,8-tetrahydrofolate + NADP(+) = (6R)-5,10-methenyltetrahydrofolate + NADPH. The catalysed reaction is (6R)-5,10-methenyltetrahydrofolate + H2O = (6R)-10-formyltetrahydrofolate + H(+). Its pathway is one-carbon metabolism; tetrahydrofolate interconversion. Its function is as follows. Catalyzes the oxidation of 5,10-methylenetetrahydrofolate to 5,10-methenyltetrahydrofolate and then the hydrolysis of 5,10-methenyltetrahydrofolate to 10-formyltetrahydrofolate. This is Bifunctional protein FolD from Rhodopseudomonas palustris (strain ATCC BAA-98 / CGA009).